We begin with the raw amino-acid sequence, 388 residues long: Leucine aminopeptidase 1 (388 aa).

The first 19 residues, 1 to 19 (MKLPALLILGVAASTMVLA), serve as a signal peptide directing secretion. Positions 20–88 (AIAPDQVPLN…LPKVFPTPAV (69 aa)) are excised as a propeptide. N-linked (GlcNAc...) asparagine glycans are attached at residues Asn-96, Asn-119, Asn-149, Asn-164, and Asn-181. Zn(2+)-binding residues include His-189 and Asp-207. Asn-232 is a glycosylation site (N-linked (GlcNAc...) asparagine). Glu-246 and Asp-273 together coordinate Zn(2+). An intrachain disulfide couples Cys-322 to Cys-326. His-355 lines the Zn(2+) pocket.

It belongs to the peptidase M28 family. M28E subfamily. Monomer. Requires Zn(2+) as cofactor.

The protein resides in the secreted. Functionally, extracellular aminopeptidase that allows assimilation of proteinaceous substrates. The chain is Leucine aminopeptidase 1 (LAP1) from Paracoccidioides brasiliensis (strain Pb03).